Here is a 490-residue protein sequence, read N- to C-terminus: Sphingomyelinase (490 aa).

The signal sequence occupies residues Met1 to Ala31. The tract at residues Ser30–Ser49 is disordered. The Periplasmic portion of the chain corresponds to Ala32–Arg136. The beta stranded transmembrane segment at Met137–Gly145 threads the bilayer. The Extracellular segment spans residues Ala146–Thr161. Residues Ala162–Ala168 traverse the membrane as a beta stranded segment. Residues Asp169–Gly171 lie on the Periplasmic side of the membrane. A beta stranded membrane pass occupies residues Phe172 to Val182. Residues Ser183–Ser187 lie on the Extracellular side of the membrane. A beta stranded transmembrane segment spans residues Leu188–Tyr196. Over Leu197 to Asp204 the chain is Periplasmic. A beta stranded membrane pass occupies residues Asp205–Val213. The Extracellular portion of the chain corresponds to Gly214 to Arg490.

This sequence belongs to the SpmT family.

The protein resides in the cell outer membrane. It catalyses the reaction a sphingomyelin + H2O = phosphocholine + an N-acylsphing-4-enine + H(+). Functionally, catalyzes the cleavage of sphingomyelin, a major lipid in eukaryotic cells, into ceramide and phosphocholine, which are then utilized by M.bovis as carbon, nitrogen and phosphorus sources, respectively. Thus, enables M.bovis to utilize sphingomyelin as a source of several essential nutrients for intracellular growth during infection. Furthermore, lyses erythrocytes and constitutes a hemolytic factor. The chain is Sphingomyelinase from Mycobacterium bovis (strain ATCC BAA-935 / AF2122/97).